A 234-amino-acid chain; its full sequence is MLSDGVEITSRSGGRFGAYLGKPTTDSAPIVVIAQEIFGITPFIRETVEWLVGAGFGCVCPDLYWRQAPNIELDANVPSEREQALALFRDFDMEAGVNDLSCAIEYARALPFSNGRVAVVGYCLGGALAFDVAARSLADCSIGYYGVGLEKKVSLVPAITRPAMFHMGTKDHYVTEEARSILEEHFGRNKNLSLHWYPVGHSFARSSSPNFDQAATTVANARTLELLAMLKDPS.

Catalysis depends on residues C123, D171, and H201.

The protein belongs to the dienelactone hydrolase family. As to quaternary structure, monomer.

It carries out the reaction 2-(5-oxo-2,5-dihydrofuran-2-ylidene)acetate + H2O = 4-oxohex-2-enedioate + H(+). The protein operates within aromatic compound metabolism; 3-chlorocatechol degradation. In terms of biological role, ring cleavage of cyclic ester dienelactone to produce maleylacetate. The sequence is that of Carboxymethylenebutenolidase 1 (tfdEI) from Cupriavidus pinatubonensis (strain JMP 134 / LMG 1197) (Cupriavidus necator (strain JMP 134)).